The sequence spans 108 residues: T-cell acute lymphocytic leukemia protein 2 homolog (108 aa).

The bHLH domain maps to 2–54; sequence TRKIFTNTRERWRQQSVNNAFAKLRKLIPTHPPDKKLSKNETLRLAMRYINFL. The tract at residues 76 to 108 is disordered; the sequence is GLFPPKTRLPDEDDRTLLNDYRVPSPGPSHGAP.

The polypeptide is T-cell acute lymphocytic leukemia protein 2 homolog (Tal2) (Mus musculus (Mouse)).